A 28-amino-acid chain; its full sequence is Dolichyl-diphosphooligosaccharide--protein glycosyltransferase subunit 1 (28 aa).

It belongs to the OST1 family. Component of the oligosaccharyltransferase (OST) complex.

It localises to the endoplasmic reticulum membrane. Its pathway is protein modification; protein glycosylation. In terms of biological role, subunit of the oligosaccharyl transferase (OST) complex that catalyzes the initial transfer of a defined glycan (Glc(3)Man(9)GlcNAc(2) in eukaryotes) from the lipid carrier dolichol-pyrophosphate to an asparagine residue within an Asn-X-Ser/Thr consensus motif in nascent polypeptide chains, the first step in protein N-glycosylation. N-glycosylation occurs cotranslationally and the complex associates with the Sec61 complex at the channel-forming translocon complex that mediates protein translocation across the endoplasmic reticulum (ER). All subunits are required for a maximal enzyme activity. This chain is Dolichyl-diphosphooligosaccharide--protein glycosyltransferase subunit 1, found in Gallus gallus (Chicken).